We begin with the raw amino-acid sequence, 470 residues long: Glutamyl-tRNA reductase (470 aa).

Substrate is bound by residues 49–52 (TCNR), Ser109, 114–116 (ESQ), and Gln120. Residue Cys50 is the Nucleophile of the active site. NADP(+) is bound at residue 223-228 (GAGAVG).

This sequence belongs to the glutamyl-tRNA reductase family. Homodimer.

It carries out the reaction (S)-4-amino-5-oxopentanoate + tRNA(Glu) + NADP(+) = L-glutamyl-tRNA(Glu) + NADPH + H(+). Its pathway is porphyrin-containing compound metabolism; protoporphyrin-IX biosynthesis; 5-aminolevulinate from L-glutamyl-tRNA(Glu): step 1/2. In terms of biological role, catalyzes the NADPH-dependent reduction of glutamyl-tRNA(Glu) to glutamate 1-semialdehyde (GSA). This is Glutamyl-tRNA reductase from Frankia alni (strain DSM 45986 / CECT 9034 / ACN14a).